Here is a 73-residue protein sequence, read N- to C-terminus: Protein WFDC10B (73 aa).

An N-terminal signal peptide occupies residues 1–21 (MAPQTLLLVLVLCVLLLQAQG). A WAP domain is found at 28–73 (RMQRIKVCEKRPSIDLCIHHCSYFQKCETNKICCSAFCGNICMSIL).

In terms of tissue distribution, ubiquitously expressed.

The protein resides in the secreted. The chain is Protein WFDC10B (WFDC10B) from Homo sapiens (Human).